A 216-amino-acid polypeptide reads, in one-letter code: Phosphatidylserine decarboxylase proenzyme (216 aa).

The active-site Schiff-base intermediate with substrate; via pyruvic acid is the Ser-182. Position 182 is a pyruvic acid (Ser); by autocatalysis (Ser-182).

This sequence belongs to the phosphatidylserine decarboxylase family. PSD-A subfamily. Heterodimer of a large membrane-associated beta subunit and a small pyruvoyl-containing alpha subunit. Requires pyruvate as cofactor. Post-translationally, is synthesized initially as an inactive proenzyme. Formation of the active enzyme involves a self-maturation process in which the active site pyruvoyl group is generated from an internal serine residue via an autocatalytic post-translational modification. Two non-identical subunits are generated from the proenzyme in this reaction, and the pyruvate is formed at the N-terminus of the alpha chain, which is derived from the carboxyl end of the proenzyme. The post-translation cleavage follows an unusual pathway, termed non-hydrolytic serinolysis, in which the side chain hydroxyl group of the serine supplies its oxygen atom to form the C-terminus of the beta chain, while the remainder of the serine residue undergoes an oxidative deamination to produce ammonia and the pyruvoyl prosthetic group on the alpha chain.

Its subcellular location is the cell membrane. It catalyses the reaction a 1,2-diacyl-sn-glycero-3-phospho-L-serine + H(+) = a 1,2-diacyl-sn-glycero-3-phosphoethanolamine + CO2. Its pathway is phospholipid metabolism; phosphatidylethanolamine biosynthesis; phosphatidylethanolamine from CDP-diacylglycerol: step 2/2. Functionally, catalyzes the formation of phosphatidylethanolamine (PtdEtn) from phosphatidylserine (PtdSer). The polypeptide is Phosphatidylserine decarboxylase proenzyme (Burkholderia mallei (strain NCTC 10247)).